The primary structure comprises 337 residues: ATP-dependent 6-phosphofructokinase (337 aa).

Glycine 11 contributes to the ATP binding site. 21–25 is a binding site for ADP; it reads RAVVR. Residues 72 to 73 and 102 to 105 contribute to the ATP site; these read RY and GDGS. Aspartate 103 lines the Mg(2+) pocket. Residue 125 to 127 coordinates substrate; sequence TID. Aspartate 127 functions as the Proton acceptor in the catalytic mechanism. ADP is bound at residue arginine 154. Substrate is bound by residues arginine 162 and 169–171; that span reads MGR. ADP contacts are provided by residues 185–187, lysine 212, and 214–216; these read GAD and KNH. Substrate contacts are provided by residues glutamate 223, arginine 245, and 251-254; that span reads HILR.

This sequence belongs to the phosphofructokinase type A (PFKA) family. ATP-dependent PFK group I subfamily. Prokaryotic clade 'B1' sub-subfamily. Homotetramer. The cofactor is Mg(2+).

The protein localises to the cytoplasm. It catalyses the reaction beta-D-fructose 6-phosphate + ATP = beta-D-fructose 1,6-bisphosphate + ADP + H(+). It participates in carbohydrate degradation; glycolysis; D-glyceraldehyde 3-phosphate and glycerone phosphate from D-glucose: step 3/4. Its activity is regulated as follows. Allosterically activated by ADP and other diphosphonucleosides, and allosterically inhibited by phosphoenolpyruvate. Functionally, catalyzes the phosphorylation of D-fructose 6-phosphate to fructose 1,6-bisphosphate by ATP, the first committing step of glycolysis. In Streptococcus pyogenes serotype M4 (strain MGAS10750), this protein is ATP-dependent 6-phosphofructokinase.